The sequence spans 177 residues: Ribosome maturation factor RimM (177 aa).

One can recognise a PRC barrel domain in the interval 100–177 (EDEYYWSDLV…TVLVAWPSDY (78 aa)).

The protein belongs to the RimM family. In terms of assembly, binds ribosomal protein uS19.

The protein resides in the cytoplasm. An accessory protein needed during the final step in the assembly of 30S ribosomal subunit, possibly for assembly of the head region. Essential for efficient processing of 16S rRNA. May be needed both before and after RbfA during the maturation of 16S rRNA. It has affinity for free ribosomal 30S subunits but not for 70S ribosomes. The protein is Ribosome maturation factor RimM of Psychrobacter arcticus (strain DSM 17307 / VKM B-2377 / 273-4).